A 167-amino-acid polypeptide reads, in one-letter code: Insertion element IS1 2 protein InsB (167 aa).

Belongs to the transposase 27 family.

Functionally, absolutely required for transposition of IS1. The protein is Insertion element IS1 2 protein InsB (insB2) of Escherichia coli (strain K12).